A 90-amino-acid polypeptide reads, in one-letter code: DNA-directed RNA polymerase subunit omega (90 aa).

The protein belongs to the RNA polymerase subunit omega family. As to quaternary structure, the RNAP catalytic core consists of 2 alpha, 1 beta, 1 beta' and 1 omega subunit. When a sigma factor is associated with the core the holoenzyme is formed, which can initiate transcription.

The enzyme catalyses RNA(n) + a ribonucleoside 5'-triphosphate = RNA(n+1) + diphosphate. Its function is as follows. Promotes RNA polymerase assembly. Latches the N- and C-terminal regions of the beta' subunit thereby facilitating its interaction with the beta and alpha subunits. Required for kasugamycin production and aerial mycelium formation in S.kasugaensis and responsible for pleiotropy. The chain is DNA-directed RNA polymerase subunit omega (rpoZ) from Streptomyces kasugaensis.